The following is a 117-amino-acid chain: UPF0375 protein Y45F10C.2 (117 aa).

The first 20 residues, 1-20 (MNSFVSTVLLLSVTIALVSG), serve as a signal peptide directing secretion.

Belongs to the UPF0375 family. Expressed in the uterine epithelium.

It is found in the secreted. Its function is as follows. Negatively regulates the egg-laying rate by promoting retention of fertilized eggs. This chain is UPF0375 protein Y45F10C.2, found in Caenorhabditis elegans.